The following is a 700-amino-acid chain: Elongation factor G (700 aa).

One can recognise a tr-type G domain in the interval 8–290; that stretch reads SLYRNIGISA…AVIDYLPAPT (283 aa). GTP-binding positions include 17–24, 88–92, and 142–145; these read AHIDAGKT, DTPGH, and NKMD.

The protein belongs to the TRAFAC class translation factor GTPase superfamily. Classic translation factor GTPase family. EF-G/EF-2 subfamily.

The protein localises to the cytoplasm. Its function is as follows. Catalyzes the GTP-dependent ribosomal translocation step during translation elongation. During this step, the ribosome changes from the pre-translocational (PRE) to the post-translocational (POST) state as the newly formed A-site-bound peptidyl-tRNA and P-site-bound deacylated tRNA move to the P and E sites, respectively. Catalyzes the coordinated movement of the two tRNA molecules, the mRNA and conformational changes in the ribosome. The chain is Elongation factor G from Histophilus somni (strain 129Pt) (Haemophilus somnus).